Reading from the N-terminus, the 98-residue chain is NADH-ubiquinone oxidoreductase chain 4L (98 aa).

The next 3 helical transmembrane spans lie at 1–21, 29–49, and 59–79; these read MTAI…GVLV, TLLC…LLIT, and LPLT…ALLV.

Belongs to the complex I subunit 4L family. Core subunit of respiratory chain NADH dehydrogenase (Complex I) which is composed of 45 different subunits.

It is found in the mitochondrion inner membrane. The enzyme catalyses a ubiquinone + NADH + 5 H(+)(in) = a ubiquinol + NAD(+) + 4 H(+)(out). Functionally, core subunit of the mitochondrial membrane respiratory chain NADH dehydrogenase (Complex I) which catalyzes electron transfer from NADH through the respiratory chain, using ubiquinone as an electron acceptor. Part of the enzyme membrane arm which is embedded in the lipid bilayer and involved in proton translocation. The polypeptide is NADH-ubiquinone oxidoreductase chain 4L (MT-ND4L) (Notoryctes typhlops (Southern marsupial mole)).